The primary structure comprises 236 residues: Phosphoribosylaminoimidazole-succinocarboxamide synthase (236 aa).

This sequence belongs to the SAICAR synthetase family.

It carries out the reaction 5-amino-1-(5-phospho-D-ribosyl)imidazole-4-carboxylate + L-aspartate + ATP = (2S)-2-[5-amino-1-(5-phospho-beta-D-ribosyl)imidazole-4-carboxamido]succinate + ADP + phosphate + 2 H(+). It participates in purine metabolism; IMP biosynthesis via de novo pathway; 5-amino-1-(5-phospho-D-ribosyl)imidazole-4-carboxamide from 5-amino-1-(5-phospho-D-ribosyl)imidazole-4-carboxylate: step 1/2. The sequence is that of Phosphoribosylaminoimidazole-succinocarboxamide synthase from Streptococcus equi subsp. zooepidemicus (strain H70).